The following is a 495-amino-acid chain: MAEPSLRTASPGGSAASDDHEFEPSADMLVHEFDDEQTLEEEEMLEGEVNFTSEIEHLERESEMPIDELLRLYGYGSTVPLPGEEEEDEEDMDNDCNSGCSGEIKDEAIKDSSGQEDETQSSNDDPTPSFTCRDVREVIRPRRCKYFDTNHEIEEESEDDEDYVPSEDWKKEIMVGSMFQAEIPVGICKYRETEKVYENDDQLLWDPEYVMEERVIDFLNEASRRTCEERGLDAIPEGSHIKDNEQALYELVKCNFDTEEALRRLRFNVKAAREELSVWTEEECRNFEQGLKAYGKDFHLIQANKVRTRSVGECVAFYYMWKKSERYDFFAQQTRFGKKKYNLHPGVTDYMDRLLDESESATSSRAPSPPPTTSNSNTSQSEKEDCTASNNTQNGVSVNGPCAITAYKDEAKQGVHLNGPTISSSDPSSNETDTNGYNRENVTDDSRFSHTSGKTDTNPDDTNERPIKRQRMDSPGKESTGSSEFSQEVFSHGEV.

2 disordered regions span residues 1–25 (MAEPSLRTASPGGSAASDDHEFEPS) and 76–131 (GSTV…PSFT). Residues 83-94 (GEEEEDEEDMDN) are compositionally biased toward acidic residues. A compositionally biased stretch (polar residues) spans 120–130 (QSSNDDPTPSF). Residues 171–269 (KEIMVGSMFQ…EALRRLRFNV (99 aa)) enclose the ELM2 domain. An SANT domain is found at 274-326 (EELSVWTEEECRNFEQGLKAYGKDFHLIQANKVRTRSVGECVAFYYMWKKSER). 2 disordered regions span residues 356–397 (DESE…NGVS) and 416–495 (HLNG…HGEV). Composition is skewed to polar residues over residues 387 to 397 (TASNNTQNGVS) and 420 to 440 (PTISSSDPSSNETDTNGYNRE). The span at 462-476 (TNERPIKRQRMDSPG) shows a compositional bias: basic and acidic residues. Residues 477–489 (KESTGSSEFSQEV) are compositionally biased toward polar residues.

It localises to the nucleus. Functionally, transcriptional repressor regulating the expression of a number of genes. Probably functions through recruitment of histone deacetylases involved in chromatin silencing. The chain is Mesoderm induction early response protein 1 (mier1) from Xenopus laevis (African clawed frog).